Consider the following 165-residue polypeptide: Protein C2-DOMAIN ABA-RELATED 7 (165 aa).

Met-1 is modified (N-acetylmethionine). One can recognise a C2 domain in the interval 1-106 (MEELVGLLRI…HKMGLQELPD (106 aa)). Positions 21, 22, 27, 73, 74, 75, and 81 each coordinate Ca(2+).

Belongs to the plant CAR protein family. As to quaternary structure, binds to PYR/PYL/RCAR abscisic acid intracellular receptors in an ABA-independent manner, both at the plasma membrane and in the nucleus.

The protein localises to the cell membrane. It localises to the nucleus. Functionally, stimulates the GTPase/ATPase activities of Obg-like ATPases. Mediates the transient calcium-dependent interaction of PYR/PYL/RCAR abscisic acid (ABA) receptors with the plasma membrane and thus regulates ABA sensitivity. The sequence is that of Protein C2-DOMAIN ABA-RELATED 7 from Arabidopsis thaliana (Mouse-ear cress).